The sequence spans 556 residues: Arginine--tRNA ligase (556 aa).

Residues 133–143 (ANPTGPIHIGH) carry the 'HIGH' region motif.

It belongs to the class-I aminoacyl-tRNA synthetase family. Monomer.

The protein resides in the cytoplasm. It catalyses the reaction tRNA(Arg) + L-arginine + ATP = L-arginyl-tRNA(Arg) + AMP + diphosphate. This Dehalococcoides mccartyi (strain ATCC BAA-2100 / JCM 16839 / KCTC 5957 / BAV1) protein is Arginine--tRNA ligase.